A 233-amino-acid polypeptide reads, in one-letter code: LexA repressor (233 aa).

Positions 26–46 (FDEMKEALDLRSKSGIHRLIT) form a DNA-binding region, H-T-H motif. Catalysis depends on for autocatalytic cleavage activity residues serine 154 and lysine 192.

The protein belongs to the peptidase S24 family. In terms of assembly, homodimer.

The catalysed reaction is Hydrolysis of Ala-|-Gly bond in repressor LexA.. Functionally, represses a number of genes involved in the response to DNA damage (SOS response), including recA and lexA. In the presence of single-stranded DNA, RecA interacts with LexA causing an autocatalytic cleavage which disrupts the DNA-binding part of LexA, leading to derepression of the SOS regulon and eventually DNA repair. This chain is LexA repressor, found in Roseobacter denitrificans (strain ATCC 33942 / OCh 114) (Erythrobacter sp. (strain OCh 114)).